The primary structure comprises 594 residues: DNA ligase (594 aa).

E280 lines the ATP pocket. Residue K282 is the N6-AMP-lysine intermediate of the active site. R287, R316, E345, F385, R456, and K462 together coordinate ATP.

Belongs to the ATP-dependent DNA ligase family. Mg(2+) serves as cofactor.

The enzyme catalyses ATP + (deoxyribonucleotide)n-3'-hydroxyl + 5'-phospho-(deoxyribonucleotide)m = (deoxyribonucleotide)n+m + AMP + diphosphate.. Its function is as follows. DNA ligase that seals nicks in double-stranded DNA during DNA replication, DNA recombination and DNA repair. The protein is DNA ligase of Halorubrum lacusprofundi (strain ATCC 49239 / DSM 5036 / JCM 8891 / ACAM 34).